A 146-amino-acid chain; its full sequence is Catabolic 3-dehydroquinase (146 aa).

Tyr24 (proton acceptor) is an active-site residue. Residues Asn78, His84, and Asp91 each contribute to the substrate site. The active-site Proton donor is His104. Substrate contacts are provided by residues 105–106 and Arg115; that span reads IT.

The protein belongs to the type-II 3-dehydroquinase family. Homododecamer. Adopts a ring-like structure, composed of an arrangement of two hexameric rings stacked on top of one another.

It carries out the reaction 3-dehydroquinate = 3-dehydroshikimate + H2O. The protein operates within aromatic compound metabolism; 3,4-dihydroxybenzoate biosynthesis; 3,4-dihydroxybenzoate from 3-dehydroquinate: step 1/2. In terms of biological role, is involved in the catabolism of quinate. Allows the utilization of quinate as carbon source via the beta-ketoadipate pathway. The sequence is that of Catabolic 3-dehydroquinase from Meyerozyma guilliermondii (strain ATCC 6260 / CBS 566 / DSM 6381 / JCM 1539 / NBRC 10279 / NRRL Y-324) (Yeast).